The following is a 521-amino-acid chain: UDP-N-acetylmuramate--L-alanine ligase (521 aa).

G136–T142 provides a ligand contact to ATP.

The protein belongs to the MurCDEF family.

Its subcellular location is the cytoplasm. It catalyses the reaction UDP-N-acetyl-alpha-D-muramate + L-alanine + ATP = UDP-N-acetyl-alpha-D-muramoyl-L-alanine + ADP + phosphate + H(+). Its pathway is cell wall biogenesis; peptidoglycan biosynthesis. Functionally, cell wall formation. This Bifidobacterium adolescentis (strain ATCC 15703 / DSM 20083 / NCTC 11814 / E194a) protein is UDP-N-acetylmuramate--L-alanine ligase.